Here is a 56-residue protein sequence, read N- to C-terminus: Small ribosomal subunit protein uS14 (56 aa).

Zn(2+) is bound by residues cysteine 21, cysteine 24, cysteine 39, and cysteine 42.

It belongs to the universal ribosomal protein uS14 family. As to quaternary structure, component of the 40S small ribosomal subunit. The cofactor is Zn(2+).

The protein resides in the cytoplasm. The protein localises to the cytosol. Its subcellular location is the rough endoplasmic reticulum. This is Small ribosomal subunit protein uS14 (RpS29) from Lonomia obliqua (Moth).